A 268-amino-acid polypeptide reads, in one-letter code: Shikimate dehydrogenase (NADP(+)) (268 aa).

Shikimate is bound by residues 13 to 15 and Thr-60; that span reads SLS. Catalysis depends on Lys-64, which acts as the Proton acceptor. Residue Glu-76 participates in NADP(+) binding. Residues Asn-85 and Asp-100 each contribute to the shikimate site. NADP(+) is bound by residues 124–128, 148–153, and Ile-209; these read GAGGA and NRTMAR. Tyr-211 is a shikimate binding site. Gly-232 contacts NADP(+).

It belongs to the shikimate dehydrogenase family. As to quaternary structure, homodimer.

The catalysed reaction is shikimate + NADP(+) = 3-dehydroshikimate + NADPH + H(+). The protein operates within metabolic intermediate biosynthesis; chorismate biosynthesis; chorismate from D-erythrose 4-phosphate and phosphoenolpyruvate: step 4/7. Involved in the biosynthesis of the chorismate, which leads to the biosynthesis of aromatic amino acids. Catalyzes the reversible NADPH linked reduction of 3-dehydroshikimate (DHSA) to yield shikimate (SA). This is Shikimate dehydrogenase (NADP(+)) from Staphylococcus aureus (strain MSSA476).